The primary structure comprises 204 residues: 8-oxoguanine DNA glycosylase/AP lyase (204 aa).

Active-site residues include Lys-129 and Asp-147.

Belongs to the type-2 OGG1 family.

It catalyses the reaction 2'-deoxyribonucleotide-(2'-deoxyribose 5'-phosphate)-2'-deoxyribonucleotide-DNA = a 3'-end 2'-deoxyribonucleotide-(2,3-dehydro-2,3-deoxyribose 5'-phosphate)-DNA + a 5'-end 5'-phospho-2'-deoxyribonucleoside-DNA + H(+). In terms of biological role, catalyzes the excision of an oxidatively damaged form of guanine (7,8-dihydro-8-oxoguanine = 8-oxoG) from DNA. Also cleaves the DNA backbone at apurinic/apyrimidinic sites (AP sites). Prefers oligomers containing 8-oxoG:C, 8-oxoG:T and 8-oxoG:G base pairs, and is less effective on oligomers containing 8-oxoG:A mispairs. In Thermoplasma volcanium (strain ATCC 51530 / DSM 4299 / JCM 9571 / NBRC 15438 / GSS1), this protein is 8-oxoguanine DNA glycosylase/AP lyase.